The primary structure comprises 338 residues: MLKEIRGKSAKNLRGRSFLKLLDFTTDEIRYLLDLSKNFKDMKRAGIPHRYLEGKNIVLLFEKTSTRTRCSFEVAGYDLGMGVTYLDPNSSQMGHKESIEDTARVLGRMYDGIEYRGFSQELVETLAEYSGVPVWNGLTDLFHPTQMLADLLTIEEKFGYLKGLKFTYMGDARNNVANSLMIACVKMGMHFTACSPKHLFPTEDLVAEAKKIAAQTGGSVTLTENVSEGTKGAHVLYTDIWVSMGEPDSVWEERIKLLKPYQVNKAAMDNADKDAIFLHCLPSFHDLKTTKGQEINKKFGLPEMEVTNEVFESHKSVVFDEAENRMHTIKAVMYATMC.

Carbamoyl phosphate contacts are provided by residues 65 to 68 (STRT), Q92, R116, and 143 to 146 (HPTQ). Residues N175, D239, and 243–244 (SM) contribute to the L-ornithine site. Residues 280–281 (CL) and R325 contribute to the carbamoyl phosphate site.

Belongs to the aspartate/ornithine carbamoyltransferase superfamily. OTCase family.

Its subcellular location is the cytoplasm. The catalysed reaction is carbamoyl phosphate + L-ornithine = L-citrulline + phosphate + H(+). Its pathway is amino-acid degradation; L-arginine degradation via ADI pathway; carbamoyl phosphate from L-arginine: step 2/2. In terms of biological role, reversibly catalyzes the transfer of the carbamoyl group from carbamoyl phosphate (CP) to the N(epsilon) atom of ornithine (ORN) to produce L-citrulline. The chain is Ornithine carbamoyltransferase, catabolic from Treponema denticola (strain ATCC 35405 / DSM 14222 / CIP 103919 / JCM 8153 / KCTC 15104).